Consider the following 107-residue polypeptide: Ig kappa chain V-VI region NQ2-17.4.1 (107 aa).

A framework-1 region spans residues 1-23; it reads QIVLTQSPAIMSASPGQKVTMTC. Cysteine 23 and cysteine 87 are oxidised to a cystine. The segment at 24–33 is complementarity-determining-1; that stretch reads SASSSVSYMH. Residues 34 to 48 form a framework-2 region; sequence WYQQKSGTSPKRWIY. The segment at 49–55 is complementarity-determining-2; that stretch reads DTSKLAS. A framework-3 region spans residues 56–87; it reads GVPARFSGSGSATSYSLTITSMQAEDAATYYC. A complementarity-determining-3 region spans residues 88-96; that stretch reads QQWSSNPLT. The tract at residues 97–106 is framework-4; it reads FGAGTKLELK.

Its function is as follows. Anti-2-phenyl oxazolone (PHOX) Antibody. This is Ig kappa chain V-VI region NQ2-17.4.1 from Mus musculus (Mouse).